The primary structure comprises 808 residues: Phenylalanine--tRNA ligase beta subunit (808 aa).

Residues 40 to 157 (NKGATNVVVG…QSVEPGQDAL (118 aa)) enclose the tRNA-binding domain. Positions 411-486 (RSERVIALDL…RLYGYDELPS (76 aa)) constitute a B5 domain. Residues aspartate 464, aspartate 470, glutamate 473, and glutamate 474 each contribute to the Mg(2+) site. Positions 714–807 (PRYPAITRDM…VQKQTGAVLR (94 aa)) constitute an FDX-ACB domain.

This sequence belongs to the phenylalanyl-tRNA synthetase beta subunit family. Type 1 subfamily. Tetramer of two alpha and two beta subunits. Requires Mg(2+) as cofactor.

It localises to the cytoplasm. It catalyses the reaction tRNA(Phe) + L-phenylalanine + ATP = L-phenylalanyl-tRNA(Phe) + AMP + diphosphate + H(+). The polypeptide is Phenylalanine--tRNA ligase beta subunit (Shouchella clausii (strain KSM-K16) (Alkalihalobacillus clausii)).